The following is a 473-amino-acid chain: BPI fold-containing family B member 3 (473 aa).

Residues 1–20 (MMLGVYTLLLLWGLATPCLG) form the signal peptide. N139 carries an N-linked (GlcNAc...) asparagine glycan. A disulfide bond links C161 and C196.

The protein belongs to the BPI/LBP/Plunc superfamily. BPI/LBP family.

Its subcellular location is the secreted. Functionally, may have the capacity to recognize and bind specific classes of odorants. May act as a carrier molecule, transporting odorants across the mucus layer to access receptor sites. May serve as a primary defense mechanism by recognizing and removing potentially harmful odorants or pathogenic microorganisms from the mucosa or clearing excess odorant from mucus to enable new odorant stimuli to be received. The polypeptide is BPI fold-containing family B member 3 (Mus musculus (Mouse)).